Reading from the N-terminus, the 238-residue chain is Complement C1q-like protein 4 (238 aa).

The N-terminal stretch at 1–15 (MVLLLLVAIPLLVHS) is a signal peptide. Residues 36–101 (GPRGPGPDGA…PPGPGPGGVA (66 aa)) are disordered. Residues 53–96 (PPGAKGEVGRRGKAGLRGPPGPPGPRGPPGEPGRPGPPGPPGPG) form the Collagen-like domain. Residues 71-96 (PPGPPGPRGPPGEPGRPGPPGPPGPG) are compositionally biased toward pro residues. Positions 105–238 (GYVPRIAFYA…TFSGFIIYPD (134 aa)) constitute a C1q domain.

Forms homooligomers, predominantly dimers or trimers. Forms heterooligomers with C1QL1, C1QL2 and C1QL3, when proteins are coexpressed; this interaction does not occur after secretion. Interacts with ADGRB3. Highest expression levels in testis and adipose tissue, lower levels in skeletal muscle and kidney.

The protein localises to the secreted. In terms of biological role, may regulate the number of excitatory synapses that are formed on hippocampus neurons. Has no effect on inhibitory synapses. May inhibit adipocyte differentiation at an early stage of the process. The protein is Complement C1q-like protein 4 (C1QL4) of Homo sapiens (Human).